A 427-amino-acid chain; its full sequence is Glucose-6-phosphate isomerase (427 aa).

Catalysis depends on glutamate 277, which acts as the Proton donor. Residues histidine 298 and lysine 414 contribute to the active site.

Belongs to the GPI family.

The protein resides in the cytoplasm. It carries out the reaction alpha-D-glucose 6-phosphate = beta-D-fructose 6-phosphate. It functions in the pathway carbohydrate biosynthesis; gluconeogenesis. It participates in carbohydrate degradation; glycolysis; D-glyceraldehyde 3-phosphate and glycerone phosphate from D-glucose: step 2/4. In terms of biological role, catalyzes the reversible isomerization of glucose-6-phosphate to fructose-6-phosphate. The polypeptide is Glucose-6-phosphate isomerase (Mycoplasma capricolum subsp. capricolum (strain California kid / ATCC 27343 / NCTC 10154)).